A 306-amino-acid polypeptide reads, in one-letter code: tRNA pseudouridine synthase B (306 aa).

The active-site Nucleophile is the Asp-47.

The protein belongs to the pseudouridine synthase TruB family. Type 1 subfamily.

The enzyme catalyses uridine(55) in tRNA = pseudouridine(55) in tRNA. Responsible for synthesis of pseudouridine from uracil-55 in the psi GC loop of transfer RNAs. This Neisseria meningitidis serogroup A / serotype 4A (strain DSM 15465 / Z2491) protein is tRNA pseudouridine synthase B.